A 283-amino-acid chain; its full sequence is MEMO1 family protein DKAM_1357 (283 aa).

This sequence belongs to the MEMO1 family.

In Desulfurococcus amylolyticus (strain DSM 18924 / JCM 16383 / VKM B-2413 / 1221n) (Desulfurococcus kamchatkensis), this protein is MEMO1 family protein DKAM_1357.